Consider the following 186-residue polypeptide: Alkyl hydroperoxide reductase AhpD (186 aa).

Cys-131 acts as the Proton donor in catalysis. Cysteines 131 and 134 form a disulfide. Residue Cys-134 is the Cysteine sulfenic acid (-SOH) intermediate of the active site.

Belongs to the AhpD family.

It catalyses the reaction N(6)-[(R)-dihydrolipoyl]-L-lysyl-[lipoyl-carrier protein] + a hydroperoxide = N(6)-[(R)-lipoyl]-L-lysyl-[lipoyl-carrier protein] + an alcohol + H2O. Antioxidant protein with alkyl hydroperoxidase activity. Required for the reduction of the AhpC active site cysteine residues and for the regeneration of the AhpC enzyme activity. The sequence is that of Alkyl hydroperoxide reductase AhpD from Rhodospirillum centenum (strain ATCC 51521 / SW).